Consider the following 399-residue polypeptide: MLGIVLAGGEGKRLMPLTADRAKPAVTFGGTYRLVDFVLSNLVNGDILRICVLTQYKSHSLDRHITTTWRMSSLLGNYVTPVPAQQRLGPRWFLGSADAILQSLNLVHDEQPEYVAVFGADHVYRMDPRQMLAQHIESGAGVTVAGIRVPRAESPSFGVITPGSDGQTVTGFLEKPADPPGLADDPGCVFASMGNYVFTTKALVEALHRDAEDPDSVHDMGGSILPQLTDRGEAALYDFSANHVPGETTRDQGYWRDVGTLDAYYDAHMDLIAERPAFNLYNRDWPVYTHSTQLSPARFNAGGIASESIISAGCLIRGQVTRSVLSPGVVVDPGAVVQGSVLHDNVHIGRGAVVRGAVLDKNVQVPPGATIGVNPQRDGELYTVSKGGVIALGKGQRVP.

Alpha-D-glucose 1-phosphate-binding positions include Gly-158, 174 to 175 (EK), and Ser-192.

The protein belongs to the bacterial/plant glucose-1-phosphate adenylyltransferase family. As to quaternary structure, homotetramer.

The enzyme catalyses alpha-D-glucose 1-phosphate + ATP + H(+) = ADP-alpha-D-glucose + diphosphate. Its pathway is glycan biosynthesis; glycogen biosynthesis. Involved in the biosynthesis of ADP-glucose, a building block required for the elongation reactions to produce glycogen. Catalyzes the reaction between ATP and alpha-D-glucose 1-phosphate (G1P) to produce pyrophosphate and ADP-Glc. The sequence is that of Glucose-1-phosphate adenylyltransferase from Streptomyces coelicolor (strain ATCC BAA-471 / A3(2) / M145).